The sequence spans 204 residues: Holliday junction branch migration complex subunit RuvA (204 aa).

The tract at residues 1-63 is domain I; that stretch reads MIGKLSGKAD…EEHIHLYGFL (63 aa). The interval 64–142 is domain II; the sequence is TLEEKNFFNL…KISSSSAIKD (79 aa). Positions 143-153 are flexible linker; the sequence is SLNIKNITPVT. Residues 153 to 204 form a domain III region; sequence TSNEVMKALINLGFSRFEAQNVVQGIITQNPKISIDELIKTALKNRNSKFFS.

The protein belongs to the RuvA family. As to quaternary structure, homotetramer. Forms an RuvA(8)-RuvB(12)-Holliday junction (HJ) complex. HJ DNA is sandwiched between 2 RuvA tetramers; dsDNA enters through RuvA and exits via RuvB. An RuvB hexamer assembles on each DNA strand where it exits the tetramer. Each RuvB hexamer is contacted by two RuvA subunits (via domain III) on 2 adjacent RuvB subunits; this complex drives branch migration. In the full resolvosome a probable DNA-RuvA(4)-RuvB(12)-RuvC(2) complex forms which resolves the HJ.

Its subcellular location is the cytoplasm. In terms of biological role, the RuvA-RuvB-RuvC complex processes Holliday junction (HJ) DNA during genetic recombination and DNA repair, while the RuvA-RuvB complex plays an important role in the rescue of blocked DNA replication forks via replication fork reversal (RFR). RuvA specifically binds to HJ cruciform DNA, conferring on it an open structure. The RuvB hexamer acts as an ATP-dependent pump, pulling dsDNA into and through the RuvAB complex. HJ branch migration allows RuvC to scan DNA until it finds its consensus sequence, where it cleaves and resolves the cruciform DNA. This Rickettsia canadensis (strain McKiel) protein is Holliday junction branch migration complex subunit RuvA.